The sequence spans 142 residues: Translation initiation factor 2 subunit beta (142 aa).

The protein belongs to the eIF-2-beta/eIF-5 family. Heterotrimer composed of an alpha, a beta and a gamma chain.

EIF-2 functions in the early steps of protein synthesis by forming a ternary complex with GTP and initiator tRNA. The polypeptide is Translation initiation factor 2 subunit beta (Methanosphaera stadtmanae (strain ATCC 43021 / DSM 3091 / JCM 11832 / MCB-3)).